The primary structure comprises 71 residues: Venom peptide 2-long (71 aa).

Residues 1–24 form the signal peptide; that stretch reads MKQSIIIALFATIAVMACLQMVAA. AXPX repeat units follow at residues 24 to 27, 32 to 35, 44 to 47, 50 to 53, and 54 to 57; these read AVPA, AAPG, ASPE, and AEPI. A propeptide spanning residues 25–54 is cleaved from the precursor; the sequence is VPAPVPEAAPGPVAEAEAYASPEALASPEA. Leucine 68 is subject to Leucine amide.

This sequence belongs to the MCD family. Protonectin subfamily. In terms of tissue distribution, expressed by the venom gland.

It is found in the secreted. The protein localises to the target cell membrane. In terms of biological role, antimicrobial peptide with strong activity against the fungus B.cinerea (MIC=0.5 ug/ml), and poor activities against the fungus C.albicans (MIC=100 ug/ml), the Gram-positive bacterium S.aureus (MIC=125 ug/ml) and the Gram-negative bacterium E.coli (MIC=125 ug/ml). Functionally, antimicrobial peptide with strong activity against the fungus B.cinerea (MIC=0.4 uM), and poor activities against the fungus C.albicans (MIC=16 uM), the Gram-positive bacterium S.aureus (MIC=20 uM) and the Gram-negative bacterium E.coli (MIC=79 uM). Shows cytolytic activity against insect cell lines. Has potent hemolytic activity against ovine erythrocytes. Has potent hemolytic activity against human erythrocytes (EC(50)=31 uM). In vivo, peptide injection in the vicinity of the head and thorax of lepidopteran larvae induces feeding disorder followed by death due to starvation. The polypeptide is Venom peptide 2-long (Orancistrocerus drewseni (Solitary wasp)).